The sequence spans 272 residues: Ribosomal RNA small subunit methyltransferase A (272 aa).

S-adenosyl-L-methionine-binding residues include Asn-18, Leu-20, Gly-45, Glu-66, Asp-91, and Asn-113.

This sequence belongs to the class I-like SAM-binding methyltransferase superfamily. rRNA adenine N(6)-methyltransferase family. RsmA subfamily.

The protein localises to the cytoplasm. It carries out the reaction adenosine(1518)/adenosine(1519) in 16S rRNA + 4 S-adenosyl-L-methionine = N(6)-dimethyladenosine(1518)/N(6)-dimethyladenosine(1519) in 16S rRNA + 4 S-adenosyl-L-homocysteine + 4 H(+). In terms of biological role, specifically dimethylates two adjacent adenosines (A1518 and A1519) in the loop of a conserved hairpin near the 3'-end of 16S rRNA in the 30S particle. May play a critical role in biogenesis of 30S subunits. This Serratia proteamaculans (strain 568) protein is Ribosomal RNA small subunit methyltransferase A.